The following is a 354-amino-acid chain: Uroporphyrinogen decarboxylase (354 aa).

Substrate is bound by residues 27 to 31 (RQAGR), F46, D77, Y154, S209, and H327.

The protein belongs to the uroporphyrinogen decarboxylase family. Homodimer.

It localises to the cytoplasm. The catalysed reaction is uroporphyrinogen III + 4 H(+) = coproporphyrinogen III + 4 CO2. The protein operates within porphyrin-containing compound metabolism; protoporphyrin-IX biosynthesis; coproporphyrinogen-III from 5-aminolevulinate: step 4/4. Functionally, catalyzes the decarboxylation of four acetate groups of uroporphyrinogen-III to yield coproporphyrinogen-III. The chain is Uroporphyrinogen decarboxylase from Shewanella oneidensis (strain ATCC 700550 / JCM 31522 / CIP 106686 / LMG 19005 / NCIMB 14063 / MR-1).